A 120-amino-acid chain; its full sequence is Inner membrane protein YidG (120 aa).

The Cytoplasmic segment spans residues 1-21; it reads MPDSRKARRIADPGLQPERTS. Residues 22–39 form a helical membrane-spanning segment; that stretch reads LAWFRTMLGYGALMALAI. Residues 40–48 lie on the Periplasmic side of the membrane; sequence KHNWHQAGM. A helical transmembrane segment spans residues 49–68; it reads LFWISIGILAIVALILWHYT. The Cytoplasmic portion of the chain corresponds to 69–90; it reads RNRNLMDVTNSDFSQFHVVRDK. Residues 91 to 113 form a helical membrane-spanning segment; sequence FLISLAVLSLAILFAVTHIHQLI. Over 114-120 the chain is Periplasmic; it reads VFIERVA.

It localises to the cell inner membrane. The chain is Inner membrane protein YidG (yidG) from Escherichia coli O157:H7.